The following is an 892-amino-acid chain: Iodate reductase subunit IdrA (892 aa).

3 residues coordinate [3Fe-4S] cluster: Cys-27, Cys-30, and Cys-34. The span at Arg-431–Ala-442 shows a compositional bias: gly residues. Positions Arg-431 to Glu-452 are disordered.

It belongs to the prokaryotic molybdopterin-containing oxidoreductase family. In terms of assembly, the iodate reductase (Idr) complex is composed of a molybdopterin-dependent iodate reductase (IdrA and IdrB subunits) and two associated peroxidases (IdrP1 and IdrP2). [3Fe-4S] cluster serves as cofactor. Requires Mo-bis(molybdopterin guanine dinucleotide) as cofactor.

The protein resides in the periplasm. Functionally, involved in iodate respiration. Probably catalyzes the reduction of iodate (IO(3)(-)) to hypoiodous acid (HIO) and H(2)O(2), using a reduced cytochrome c as the electron donor. The chain is Iodate reductase subunit IdrA from Pseudomonas sp. (strain SCT).